The primary structure comprises 300 residues: GTP cyclohydrolase FolE2 (300 aa).

The protein belongs to the GTP cyclohydrolase IV family.

The enzyme catalyses GTP + H2O = 7,8-dihydroneopterin 3'-triphosphate + formate + H(+). It functions in the pathway cofactor biosynthesis; 7,8-dihydroneopterin triphosphate biosynthesis; 7,8-dihydroneopterin triphosphate from GTP: step 1/1. Functionally, converts GTP to 7,8-dihydroneopterin triphosphate. The polypeptide is GTP cyclohydrolase FolE2 (Bacillus licheniformis (strain ATCC 14580 / DSM 13 / JCM 2505 / CCUG 7422 / NBRC 12200 / NCIMB 9375 / NCTC 10341 / NRRL NRS-1264 / Gibson 46)).